We begin with the raw amino-acid sequence, 68 residues long: Large ribosomal subunit protein bL33c (68 aa).

The protein belongs to the bacterial ribosomal protein bL33 family.

The protein resides in the plastid. It localises to the chloroplast. This Amborella trichopoda protein is Large ribosomal subunit protein bL33c.